Consider the following 1624-residue polypeptide: NAD-specific glutamate dehydrogenase (1624 aa).

K845 is an active-site residue.

The protein belongs to the Glu/Leu/Phe/Val dehydrogenases family. Interacts with (unphosphorylated) GarA.

It catalyses the reaction L-glutamate + NAD(+) + H2O = 2-oxoglutarate + NH4(+) + NADH + H(+). Its activity is regulated as follows. Activity is inhibited by unphosphorylated GarA. In terms of biological role, catalyzes the reversible conversion of L-glutamate to 2-oxoglutarate. The protein is NAD-specific glutamate dehydrogenase (gdh) of Mycobacterium tuberculosis (strain ATCC 25618 / H37Rv).